A 239-amino-acid polypeptide reads, in one-letter code: tRNA (guanine-N(1)-)-methyltransferase (239 aa).

Residues Gly-110 and 130–135 each bind S-adenosyl-L-methionine; that span reads VGDYVL.

This sequence belongs to the RNA methyltransferase TrmD family. As to quaternary structure, homodimer.

The protein localises to the cytoplasm. It carries out the reaction guanosine(37) in tRNA + S-adenosyl-L-methionine = N(1)-methylguanosine(37) in tRNA + S-adenosyl-L-homocysteine + H(+). Specifically methylates guanosine-37 in various tRNAs. This is tRNA (guanine-N(1)-)-methyltransferase from Borrelia turicatae (strain 91E135).